The primary structure comprises 191 residues: Chorion class B protein Ld10 (191 aa).

The first 21 residues, 1-21, serve as a signal peptide directing secretion; it reads MSAKIILVFCAQALFVQSALS.

This sequence belongs to the chorion protein family.

This protein is one of many from the eggshell of the gypsy moth. In Lymantria dispar (Gypsy moth), this protein is Chorion class B protein Ld10.